We begin with the raw amino-acid sequence, 299 residues long: 33 kDa chaperonin (299 aa).

Disulfide bonds link C234–C236 and C268–C271.

Belongs to the HSP33 family. Under oxidizing conditions two disulfide bonds are formed involving the reactive cysteines. Under reducing conditions zinc is bound to the reactive cysteines and the protein is inactive.

The protein localises to the cytoplasm. In terms of biological role, redox regulated molecular chaperone. Protects both thermally unfolding and oxidatively damaged proteins from irreversible aggregation. Plays an important role in the bacterial defense system toward oxidative stress. This is 33 kDa chaperonin from Pseudomonas putida (strain GB-1).